The primary structure comprises 414 residues: Apolipoprotein N-acyltransferase (414 aa).

A run of 6 helical transmembrane segments spans residues 19-39 (GIAL…HFGI), 40-60 (TSPL…LKLP), 63-83 (SGFA…ALSF), 91-111 (LIPF…SMAL), 121-141 (LLLW…VPEV), and 153-173 (LSFG…QRWL). In terms of domain architecture, CN hydrolase spans 202–414 (IETHIPQEIR…NRSPSGIIAP (213 aa)). Residue Glu-243 is the Proton acceptor of the active site. Lys-298 is an active-site residue. Cys-351 serves as the catalytic Nucleophile.

The protein belongs to the CN hydrolase family. Apolipoprotein N-acyltransferase subfamily.

It is found in the cell inner membrane. It catalyses the reaction N-terminal S-1,2-diacyl-sn-glyceryl-L-cysteinyl-[lipoprotein] + a glycerophospholipid = N-acyl-S-1,2-diacyl-sn-glyceryl-L-cysteinyl-[lipoprotein] + a 2-acyl-sn-glycero-3-phospholipid + H(+). It functions in the pathway protein modification; lipoprotein biosynthesis (N-acyl transfer). In terms of biological role, catalyzes the phospholipid dependent N-acylation of the N-terminal cysteine of apolipoprotein, the last step in lipoprotein maturation. The sequence is that of Apolipoprotein N-acyltransferase from Wolinella succinogenes (strain ATCC 29543 / DSM 1740 / CCUG 13145 / JCM 31913 / LMG 7466 / NCTC 11488 / FDC 602W) (Vibrio succinogenes).